Reading from the N-terminus, the 545-residue chain is Glucose-6-phosphate isomerase (545 aa).

Glu-351 functions as the Proton donor in the catalytic mechanism. Catalysis depends on residues His-382 and Lys-510.

Belongs to the GPI family.

It is found in the cytoplasm. It catalyses the reaction alpha-D-glucose 6-phosphate = beta-D-fructose 6-phosphate. Its pathway is carbohydrate biosynthesis; gluconeogenesis. The protein operates within carbohydrate degradation; glycolysis; D-glyceraldehyde 3-phosphate and glycerone phosphate from D-glucose: step 2/4. In terms of biological role, catalyzes the reversible isomerization of glucose-6-phosphate to fructose-6-phosphate. The polypeptide is Glucose-6-phosphate isomerase (Shewanella halifaxensis (strain HAW-EB4)).